The following is a 1187-amino-acid chain: Roquin-2 (1187 aa).

Residues cysteine 14, cysteine 17, cysteine 33, histidine 35, cysteine 38, cysteine 50, and aspartate 53 each contribute to the Zn(2+) site. The RING-type; degenerate zinc finger occupies 14 to 54 (CPICYNEFDENVHKPISLGCSHTVCKTCLNKLHRKACPFDQ). Residues 91–170 (ENKHYEVAKK…RTVTELILQH (80 aa)) are HEPN-N. The tract at residues 171-325 (QNPQQLSANL…SIIDKLQSPE (155 aa)) is ROQ. The segment at 326–396 (SFAKSVQELT…GLVDFIQNYS (71 aa)) is HEPN-C. The segment at 410-438 (KYKTSMCRDLRQQGGCPRGTNCTFAHSQE) adopts a C3H1-type zinc-finger fold. 2 disordered regions span residues 527–571 (VGTN…GTEL) and 640–677 (NVPE…PPPQ). Polar residues predominate over residues 529–545 (TNAQNAGPSAESVSENK). Serine 548 carries the phosphoserine modification. Polar residues predominate over residues 553 to 571 (PVSNAAATSAGPSNFGTEL). 3 positions are modified to phosphoserine: serine 806, serine 981, and serine 1115.

Interacts with EDC4. Interacts with CCR4-NOT deadenylase complex. Interacts with MAP3K5; the interaction is probably stimulus-dependent. Post-translationally, proteolytically cleaved by MALT1 in activated CD4(+) T cells; cleavage at Arg-509 is critical for promoting RC3H1 degradation in response to T-cell receptor (TCR) stimulation, and hence is necessary for prolonging the stability of a set of mRNAs controlling Th17 cell differentiation. In terms of tissue distribution, highest levels in lymph node and thymus and slightly lesser amounts in brain, lung, and spleen (at protein level). Very weak expression in heart, muscle, and kidney (at protein level). Expressed in CD4(+) helper T-cells (at protein level).

It localises to the cytoplasm. The protein resides in the P-body. It carries out the reaction S-ubiquitinyl-[E2 ubiquitin-conjugating enzyme]-L-cysteine + [acceptor protein]-L-lysine = [E2 ubiquitin-conjugating enzyme]-L-cysteine + N(6)-ubiquitinyl-[acceptor protein]-L-lysine.. The protein operates within protein modification; protein ubiquitination. Binding to dsRNA, but not CDE RNA, crosstalks with the E3 ubiquitin ligase activity and may inhibit ubiquitination. Functionally, post-transcriptional repressor of mRNAs containing a conserved stem loop motif, called constitutive decay element (CDE), which is often located in the 3'-UTR, as in HMGXB3, ICOS, IER3, NFKBID, NFKBIZ, PPP1R10, TNF and in many more mRNAs. Binds to CDE and promotes mRNA deadenylation and degradation. This process does not involve miRNAs. In follicular helper T (Tfh) cells, represses of ICOS and TNFRSF4 expression, thus preventing spontaneous Tfh cell differentiation, germinal center B-cell differentiation in the absence of immunization and autoimmunity. In resting or LPS-stimulated macrophages, controls inflammation by suppressing TNF expression. Also recognizes CDE in its own mRNA and in that of paralogous RC3H1, possibly leading to feedback loop regulation. Inhibits cooperatively with ZC3H12A the differentiation of helper T cells Th17 in lungs. They repress target mRNA encoding the Th17 cell-promoting factors IL6, ICOS, REL, IRF4, NFKBID and NFKBIZ. The cooperation requires RNA-binding by RC3H1 and the nuclease activity of ZC3H12A. miRNA-binding protein that regulates microRNA homeostasis. Enhances DICER-mediated processing of pre-MIR146a but reduces mature MIR146a levels through an increase of 3' end uridylation. Both inhibits ICOS mRNA expression and they may act together to exert the suppression. Acts as a ubiquitin E3 ligase. Pairs with E2 enzymes UBE2B, UBE2D2, UBE2E2, UBE2E3, UBE2G2, UBE2K and UBE2Q2 and produces polyubiquitin chains. Shows the strongest activity when paired with UBE2N:UBE2V1 or UBE2N:UBE2V2 E2 complexes and generate both short and long polyubiquitin chains. Involved in the ubiquitination of MAP3K5. Able to interact with double-stranded RNA (dsRNA). The sequence is that of Roquin-2 (Rc3h2) from Mus musculus (Mouse).